The primary structure comprises 781 residues: Protein translocase subunit SecA 2 (781 aa).

ATP contacts are provided by residues Gln85, 103–107 (GEGKT), and Asp491.

This sequence belongs to the SecA family. Monomer and homodimer. Part of the essential Sec protein translocation apparatus which comprises SecA, SecYEG and auxiliary proteins SecDF. Other proteins may also be involved.

Its subcellular location is the cell membrane. It is found in the cytoplasm. It carries out the reaction ATP + H2O + cellular proteinSide 1 = ADP + phosphate + cellular proteinSide 2.. Its function is as follows. Part of the Sec protein translocase complex. Interacts with the SecYEG preprotein conducting channel. Has a central role in coupling the hydrolysis of ATP to the transfer of proteins into and across the cell membrane, serving as an ATP-driven molecular motor driving the stepwise translocation of polypeptide chains across the membrane. The protein is Protein translocase subunit SecA 2 of Clostridioides difficile (strain 630) (Peptoclostridium difficile).